The chain runs to 195 residues: Molybdenum cofactor guanylyltransferase (195 aa).

Residues 10–12 (LAG), lysine 23, asparagine 51, aspartate 69, and aspartate 99 each bind GTP. Mg(2+) is bound at residue aspartate 99.

It belongs to the MobA family. As to quaternary structure, monomer. Mg(2+) serves as cofactor.

The protein localises to the cytoplasm. The enzyme catalyses Mo-molybdopterin + GTP + H(+) = Mo-molybdopterin guanine dinucleotide + diphosphate. In terms of biological role, transfers a GMP moiety from GTP to Mo-molybdopterin (Mo-MPT) cofactor (Moco or molybdenum cofactor) to form Mo-molybdopterin guanine dinucleotide (Mo-MGD) cofactor. This Histophilus somni (strain 2336) (Haemophilus somnus) protein is Molybdenum cofactor guanylyltransferase.